A 349-amino-acid chain; its full sequence is MAKASESLDLSVNESTDKALDRDCTTLSRHVLQQLQSFSADAQDLSALMNRIALAGKLVARRLSRAGLMEGVLGFTGEVNVQGESVKKMDVYANDVFISVFKQSGLVCRLASEEMDEPYYIPENCPVGRYTLLYDPIDGSSNTDTNLSLGSIFSIRQQEGDDSDGQAKDLLTNGRKQIAAGYILYGPSTMLVYTMGKGVHSFTLDPSLGEFILSEENIRIPDHGAVYSVNEGNFWQWEESMREYIRYVHRTEGYTARYSGAMVSDIHRILVQGGVFLYPGTVQNPEGKLRLLYESAPLAFLIQQAGGRATTGLVDILDVVPKKLHQRTPLIIGSKEDVAKVESFIQNGH.

Mg(2+) is bound by residues Glu-113, Asp-135, Ile-137, and Asp-138. Substrate is bound by residues Asp-138 to Ser-141, Asn-230, Tyr-258, and Lys-288. Glu-294 contributes to the Mg(2+) binding site.

The protein belongs to the FBPase class 1 family. In terms of assembly, homotetramer. The cofactor is Mg(2+).

Its subcellular location is the cytoplasm. The catalysed reaction is beta-D-fructose 1,6-bisphosphate + H2O = beta-D-fructose 6-phosphate + phosphate. Its pathway is carbohydrate biosynthesis; Calvin cycle. The chain is Fructose-1,6-bisphosphatase class 1 from Trichormus variabilis (strain ATCC 29413 / PCC 7937) (Anabaena variabilis).